Reading from the N-terminus, the 590-residue chain is Aspartate--tRNA(Asp/Asn) ligase (590 aa).

An L-aspartate-binding site is contributed by E175. The aspartate stretch occupies residues 199-202 (QQYK). L-aspartate-binding residues include R221 and H450. 221–223 (RDE) provides a ligand contact to ATP. E484 is an ATP binding site. R491 lines the L-aspartate pocket. 536 to 539 (GVDR) serves as a coordination point for ATP.

Belongs to the class-II aminoacyl-tRNA synthetase family. Type 1 subfamily. Homodimer.

It is found in the cytoplasm. The catalysed reaction is tRNA(Asx) + L-aspartate + ATP = L-aspartyl-tRNA(Asx) + AMP + diphosphate. Functionally, aspartyl-tRNA synthetase with relaxed tRNA specificity since it is able to aspartylate not only its cognate tRNA(Asp) but also tRNA(Asn). Reaction proceeds in two steps: L-aspartate is first activated by ATP to form Asp-AMP and then transferred to the acceptor end of tRNA(Asp/Asn). In Bradyrhizobium diazoefficiens (strain JCM 10833 / BCRC 13528 / IAM 13628 / NBRC 14792 / USDA 110), this protein is Aspartate--tRNA(Asp/Asn) ligase.